The chain runs to 243 residues: UPF0246 protein gbs2036 (243 aa).

The protein belongs to the UPF0246 family.

The protein is UPF0246 protein gbs2036 of Streptococcus agalactiae serotype III (strain NEM316).